The following is a 307-amino-acid chain: NAD(+) hydrolase TcpC (307 aa).

The helical transmembrane segment at 22-42 (YNILFFIFLSIAIPFLLFLAW) threads the bilayer. Residues 169-303 (THYDFFISHA…EIARELAEIA (135 aa)) form the TIR domain. Residues 178 to 179 (AK) and Glu208 contribute to the NAD(+) site. Glu244 is an active-site residue.

As to quaternary structure, interacts with host MYD88. Interacts with host TLR4.

It localises to the secreted. The protein localises to the membrane. The catalysed reaction is NAD(+) + H2O = ADP-D-ribose + nicotinamide + H(+). The enzyme catalyses NADP(+) + H2O = ADP-D-ribose 2'-phosphate + nicotinamide + H(+). Virulence factor that suppresses host Toll-like receptor (TLR)-mediated cytokine production upon infection, thereby increasing bacterial burden in the urinary tract and promoting renal tissue damage. Acts as a NAD(+) hydrolase (NADase) by catalyzing cleavage of NAD(+) into ADP-D-ribose (ADPR) and nicotinamide. Also able to hydrolyze NADP(+), but not other NAD(+)-related molecules. The protein is NAD(+) hydrolase TcpC of Escherichia coli O6:H1 (strain CFT073 / ATCC 700928 / UPEC).